Consider the following 271-residue polypeptide: Type III pantothenate kinase (271 aa).

5–12 contacts ATP; that stretch reads DISNSVTK. Substrate-binding positions include Tyr-85 and 92–95; that span reads GADR. Residue Asp-94 is the Proton acceptor of the active site. Asp-114 serves as a coordination point for K(+). Thr-117 is an ATP binding site. Thr-169 contributes to the substrate binding site.

This sequence belongs to the type III pantothenate kinase family. In terms of assembly, homodimer. NH4(+) is required as a cofactor. The cofactor is K(+).

The protein resides in the cytoplasm. The catalysed reaction is (R)-pantothenate + ATP = (R)-4'-phosphopantothenate + ADP + H(+). It participates in cofactor biosynthesis; coenzyme A biosynthesis; CoA from (R)-pantothenate: step 1/5. Functionally, catalyzes the phosphorylation of pantothenate (Pan), the first step in CoA biosynthesis. The polypeptide is Type III pantothenate kinase (Methylacidiphilum infernorum (isolate V4) (Methylokorus infernorum (strain V4))).